The primary structure comprises 611 residues: mRNA export factor GLE1 (611 aa).

Disordered stretches follow at residues 69 to 94 (SEDEMESDEGEESDDEEEEEDHSQIC) and 220 to 243 (KIRSEEAQEEARRKERAHQEEKIR). Residues 71-89 (DEMESDEGEESDDEEEEED) show a composition bias toward acidic residues.

Belongs to the GLE1 family. As to quaternary structure, part of the nuclear pore complex (NPC). The NPC has an eight-fold symmetrical structure comprising a central transport channel and two rings, the cytoplasmic and nuclear rings, to which eight filaments are attached. The cytoplasmic filaments have loose ends, while the nuclear filaments are joined in a distal ring, forming a nuclear basket. NPCs are highly dynamic in configuration and composition, and can be devided in 3 subcomplexes, the NUP62 subcomplex, the NUP107-160 subcomplex and the NUP93 subcomplex, containing approximately 30 different nucleoporin proteins.

The protein localises to the nucleus envelope. It localises to the nucleus. The protein resides in the nuclear pore complex. In terms of biological role, required for seed viability. This is mRNA export factor GLE1 from Arabidopsis thaliana (Mouse-ear cress).